Here is a 344-residue protein sequence, read N- to C-terminus: MKERLHELEREALEKIEQAGDLKALNDVRVAYLGKKGPITEVLRGMGALPPEERPKIGALANEVREAIQKALEAKQTKLEEEEVERKLAAEAIDVTLPGRPVKLGNPHPLTRVIEEIEDLFIGMGYTVAEGPEVETDYYNFEALNLPKGHPARDMQDSFYITEEILLRTHTSPMQARTMEKHRGRGPVKIICPGKVYRRDTDDATHSHQFTQIEGLVVDRNIRMSDLKGTLREFARKLFGEGRDIRFRPSFFPFTEPSVEVDVSCFRCEGHGCSVCKGTGWIEILGAGMVHPNVLEMAGFDSKTYTGFAFGMGPERIAMLKYGIDDIRHFYQNDLRFLQQFLRV.

A Mg(2+)-binding site is contributed by glutamate 256.

The protein belongs to the class-II aminoacyl-tRNA synthetase family. Phe-tRNA synthetase alpha subunit type 1 subfamily. In terms of assembly, tetramer of two alpha and two beta subunits. Mg(2+) serves as cofactor.

The protein localises to the cytoplasm. It catalyses the reaction tRNA(Phe) + L-phenylalanine + ATP = L-phenylalanyl-tRNA(Phe) + AMP + diphosphate + H(+). The polypeptide is Phenylalanine--tRNA ligase alpha subunit (Geobacillus thermodenitrificans (strain NG80-2)).